We begin with the raw amino-acid sequence, 527 residues long: Probable T-complex protein 1 subunit beta (527 aa).

It belongs to the TCP-1 chaperonin family. Heterooligomeric complex of about 850 to 900 kDa that forms two stacked rings, 12 to 16 nm in diameter.

It is found in the cytoplasm. Functionally, molecular chaperone; assists the folding of proteins upon ATP hydrolysis. Known to play a role, in vitro, in the folding of actin and tubulin. The protein is Probable T-complex protein 1 subunit beta (cct2) of Schizosaccharomyces pombe (strain 972 / ATCC 24843) (Fission yeast).